We begin with the raw amino-acid sequence, 646 residues long: Stage V sporulation protein D (646 aa).

Residue Ser-294 is the Acyl-ester intermediate of the active site. The 59-residue stretch at 580 to 638 (DTKTIEVPNVVGMSVSDLESLLVNLNVDASGKGSKIVKQSPAAGTKVKEGSKIRVYLTE) folds into the PASTA domain.

Belongs to the transpeptidase family.

The protein localises to the cell membrane. The enzyme catalyses Preferential cleavage: (Ac)2-L-Lys-D-Ala-|-D-Ala. Also transpeptidation of peptidyl-alanyl moieties that are N-acyl substituents of D-alanine.. It participates in cell wall biogenesis; peptidoglycan biosynthesis. In terms of biological role, penicillin-binding protein with an unknown catalytic activity. May have a specialized role in the morphogenesis of spore cortex, which is a modified form of peptidoglycan. Spore cortex formation is determined primarily by the mother cell. This chain is Stage V sporulation protein D (spoVD), found in Bacillus subtilis (strain 168).